The sequence spans 216 residues: Glycerol-3-phosphate acyltransferase (216 aa).

A run of 5 helical transmembrane segments spans residues 11-31 (LVLG…FGLV), 62-82 (LALA…LVAS), 95-115 (VLAG…PIWL), 132-152 (ATAW…AALF), and 171-191 (LVLA…LAWI).

It belongs to the PlsY family. Probably interacts with PlsX.

The protein resides in the cell inner membrane. The enzyme catalyses an acyl phosphate + sn-glycerol 3-phosphate = a 1-acyl-sn-glycero-3-phosphate + phosphate. It participates in lipid metabolism; phospholipid metabolism. Catalyzes the transfer of an acyl group from acyl-phosphate (acyl-PO(4)) to glycerol-3-phosphate (G3P) to form lysophosphatidic acid (LPA). This enzyme utilizes acyl-phosphate as fatty acyl donor, but not acyl-CoA or acyl-ACP. This chain is Glycerol-3-phosphate acyltransferase, found in Rhodospirillum rubrum (strain ATCC 11170 / ATH 1.1.1 / DSM 467 / LMG 4362 / NCIMB 8255 / S1).